The following is a 231-amino-acid chain: Cytidylate kinase (231 aa).

18–26 (GPSGTGKSS) is a binding site for ATP.

The protein belongs to the cytidylate kinase family. Type 1 subfamily.

It localises to the cytoplasm. The enzyme catalyses CMP + ATP = CDP + ADP. It catalyses the reaction dCMP + ATP = dCDP + ADP. The sequence is that of Cytidylate kinase from Streptomyces coelicolor (strain ATCC BAA-471 / A3(2) / M145).